The chain runs to 221 residues: Protein RER1D (221 aa).

4 consecutive transmembrane segments (helical) span residues 41–58 (IVRR…YIYR), 64–84 (GYFV…IGFL), 128–148 (FVVA…FWPI), and 149–169 (LLCY…VHMF). The tract at residues 200–221 (KGDGGDDRPSSSNSSQGNEKQD) is disordered. The segment covering 209-221 (SSSNSSQGNEKQD) has biased composition (polar residues).

This sequence belongs to the RER1 family.

Its subcellular location is the membrane. Its function is as follows. Involved in the retrieval of endoplasmic reticulum membrane proteins from the early Golgi compartment. In Arabidopsis thaliana (Mouse-ear cress), this protein is Protein RER1D.